We begin with the raw amino-acid sequence, 737 residues long: NAD(P)H-quinone oxidoreductase subunit 5, chloroplastic (737 aa).

Helical transmembrane passes span 9–29, 40–60, 89–109, 125–145, 147–167, 185–205, 219–239, 258–278, 286–306, 327–347, 354–374, 396–416, 425–445, 543–563, 602–622, and 717–737; these read WIIP…LILF, WAFQ…YLSI, IDPL…MVLI, FAYM…SNLI, IYIF…FWFT, GDFG…SFEF, NELN…GAVA, TPIS…FLVA, VIPY…LLGA, LGYM…FHLI, ALLF…VGYS, ITFL…CFWS, WLYS…TAFY, LFPI…GIPF, VVSV…YKPI, and SYLF…YLLF.

This sequence belongs to the complex I subunit 5 family. NDH is composed of at least 16 different subunits, 5 of which are encoded in the nucleus.

The protein resides in the plastid. It is found in the chloroplast thylakoid membrane. It carries out the reaction a plastoquinone + NADH + (n+1) H(+)(in) = a plastoquinol + NAD(+) + n H(+)(out). The enzyme catalyses a plastoquinone + NADPH + (n+1) H(+)(in) = a plastoquinol + NADP(+) + n H(+)(out). In terms of biological role, NDH shuttles electrons from NAD(P)H:plastoquinone, via FMN and iron-sulfur (Fe-S) centers, to quinones in the photosynthetic chain and possibly in a chloroplast respiratory chain. The immediate electron acceptor for the enzyme in this species is believed to be plastoquinone. Couples the redox reaction to proton translocation, and thus conserves the redox energy in a proton gradient. In Solanum lycopersicum (Tomato), this protein is NAD(P)H-quinone oxidoreductase subunit 5, chloroplastic (ndhF).